A 468-amino-acid polypeptide reads, in one-letter code: Homocitrate synthase (468 aa).

The region spanning Val11–Ser266 is the Pyruvate carboxyltransferase domain. Arg19 is a 2-oxoglutarate binding site. Glu20 provides a ligand contact to Mg(2+). 2-oxoglutarate contacts are provided by His83, Arg143, and Thr177. Residues His205 and His207 each contribute to the Mg(2+) site. His299 serves as the catalytic Proton acceptor.

The protein belongs to the alpha-IPM synthase/homocitrate synthase family. Homocitrate synthase LYS20/LYS21 subfamily. Mg(2+) serves as cofactor. Mn(2+) is required as a cofactor.

It carries out the reaction acetyl-CoA + 2-oxoglutarate + H2O = (2R)-homocitrate + CoA + H(+). Its pathway is amino-acid biosynthesis; L-lysine biosynthesis via AAA pathway; L-alpha-aminoadipate from 2-oxoglutarate: step 1/5. Inhibited by lysine. Catalyzes the aldol-type condensation of 2-oxoglutarate with acetyl-CoA to yield homocitrate. Carries out the first step of the alpha-aminoadipate (AAA) lysine biosynthesis pathway. Does not display 2-isopropylmalate synthase and citramalate synthase activities since it cannot use 2-oxoisovalerate or pyruvate as substrate. This is Homocitrate synthase from Sulfolobus acidocaldarius (strain ATCC 33909 / DSM 639 / JCM 8929 / NBRC 15157 / NCIMB 11770).